Consider the following 245-residue polypeptide: Serine/arginine-rich splicing factor 1B (245 aa).

The RRM 1 domain occupies 15 to 90 (CRIYVGNLPP…YRLRVEFPRS (76 aa)). Disordered regions lie at residues 89–116 (RSGRGGGRGGGGGGGVGAPRGRYGPPSR) and 192–245 (KVDG…RSRT). The span at 91-106 (GRGGGRGGGGGGGVGA) shows a compositional bias: gly residues. An RRM 2 domain is found at 120-194 (YRVIVSGLPP…ETAYIRVKVD (75 aa)). Positions 204–245 (SRSRSRSRSRSRSNSRSRSYSPRRSRGSPRYSPRHSRSRSRT) are enriched in basic residues.

The protein belongs to the splicing factor SR family.

It is found in the cytoplasm. The protein resides in the nucleus speckle. Functionally, may play a role in preventing exon skipping, ensuring the accuracy of splicing and regulating alternative splicing. This chain is Serine/arginine-rich splicing factor 1B (srsf1b), found in Danio rerio (Zebrafish).